A 70-amino-acid polypeptide reads, in one-letter code: Large ribosomal subunit protein uL29 (70 aa).

It belongs to the universal ribosomal protein uL29 family.

This Clostridium botulinum (strain ATCC 19397 / Type A) protein is Large ribosomal subunit protein uL29.